Consider the following 122-residue polypeptide: Large ribosomal subunit protein uL14 (122 aa).

This sequence belongs to the universal ribosomal protein uL14 family. In terms of assembly, part of the 50S ribosomal subunit. Forms a cluster with proteins L3 and L19. In the 70S ribosome, L14 and L19 interact and together make contacts with the 16S rRNA in bridges B5 and B8.

Its function is as follows. Binds to 23S rRNA. Forms part of two intersubunit bridges in the 70S ribosome. This chain is Large ribosomal subunit protein uL14, found in Helicobacter pylori (strain J99 / ATCC 700824) (Campylobacter pylori J99).